Here is a 75-residue protein sequence, read N- to C-terminus: MAELISVRVKPGSRKGPLVEAGEDGALTLYVQERAVDGKANEAVTKLLAEHLGVPRSRIELVSGATSRHKRFRIG.

This sequence belongs to the UPF0235 family.

This Mycolicibacterium gilvum (strain PYR-GCK) (Mycobacterium gilvum (strain PYR-GCK)) protein is UPF0235 protein Mflv_3569.